The sequence spans 767 residues: Two-component response regulator-like PRR73 (767 aa).

Positions 1 to 64 (MGSACEAGTD…EPQQTDEQKE (64 aa)) are disordered. Residues 82 to 200 (RVLLVENDDS…ELKNLWQHVW (119 aa)) enclose the Response regulatory domain. The segment covering 205–214 (SSSGSGSESG) has biased composition (low complexity). Disordered regions lie at residues 205–272 (SSSG…QSSW), 312–388 (RWLP…NEPT), 476–546 (ASNQ…RGKV), 646–701 (ANYS…SGSG), and 727–767 (NFGK…DEDR). Residues 238-252 (DNEDDDDNDEDDDDL) show a composition bias toward acidic residues. Polar residues-rich tracts occupy residues 263-272 (DNGSGTQSSW), 343-361 (RNSS…VNPT), and 488-497 (CSPQDNSSEA). Residues 518–531 (GSNGSSNNNDMGSS) are compositionally biased toward low complexity. Residues 532 to 543 (TKNAITKPSSNR) show a composition bias toward polar residues. The span at 689–700 (GAGGGNGSGSGS) shows a compositional bias: gly residues. In terms of domain architecture, CCT spans 712 to 754 (REAALNKFRQKRKVRNFGKKVRYQSRKRLAEQRPRIRGQFVRQ). A compositionally biased stretch (basic residues) spans 727–738 (NFGKKVRYQSRK).

It belongs to the ARR-like family.

It is found in the nucleus. Functionally, controls photoperiodic flowering response. Seems to be one of the component of the circadian clock. Expression of several members of the ARR-like family is controlled by circadian rhythm. The particular coordinated sequential expression of PRR73, PRR37, PRR95, PRR59 and PPR1 result to circadian waves that may be at the basis of the endogenous circadian clock. The polypeptide is Two-component response regulator-like PRR73 (PRR73) (Oryza sativa subsp. indica (Rice)).